The primary structure comprises 237 residues: Class B acid phosphatase (237 aa).

The first 25 residues, 1–25 (MRKITLALSAACLLFSLNNAVVARA), serve as a signal peptide directing secretion. D69 functions as the Nucleophile in the catalytic mechanism. Mg(2+) contacts are provided by D69 and D71. Residue D71 is the Proton donor of the active site. Residues 137–138 (TG) and K177 each bind substrate. D192 is a Mg(2+) binding site.

Belongs to the class B bacterial acid phosphatase family. As to quaternary structure, homotetramer. Requires Mg(2+) as cofactor.

The protein resides in the periplasm. The catalysed reaction is a phosphate monoester + H2O = an alcohol + phosphate. Functionally, dephosphorylates several organic phosphate monoesters. Also has a phosphotransferase activity catalyzing the transfer of low-energy phosphate groups from organic phosphate monoesters to free hydroxyl groups of various organic compounds. The protein is Class B acid phosphatase of Enterobacter sp. (strain 638).